An 852-amino-acid chain; its full sequence is Translation initiation factor IF-2 (852 aa).

Residues 1–240 (MEDKNKTIKE…KTSSDKRDFS (240 aa)) form a disordered region. The segment covering 78–90 (KEVKYEESSRKQD) has biased composition (basic and acidic residues). Residues 106–120 (VRPSGDSSYPVSRSP) are compositionally biased toward polar residues. The segment covering 150 to 200 (RGPGQGGGYQGNRGPGQGGGYQGNRGPGQQTGPGNRFGGSGPGNRSGGPGG) has biased composition (gly residues). Positions 227 to 240 (HDKEKTSSDKRDFS) are enriched in basic and acidic residues. In terms of domain architecture, tr-type G spans 347-516 (NRPPVVTIMG…LLQAEVMDLK (170 aa)). The segment at 356–363 (GHVDHGKT) is G1. Position 356-363 (356-363 (GHVDHGKT)) interacts with GTP. Residues 381-385 (GITQH) are G2. The tract at residues 402–405 (DTPG) is G3. Residues 402 to 406 (DTPGH) and 456 to 459 (NKID) each bind GTP. Positions 456-459 (NKID) are G4. A G5 region spans residues 492-494 (SAR).

The protein belongs to the TRAFAC class translation factor GTPase superfamily. Classic translation factor GTPase family. IF-2 subfamily.

It is found in the cytoplasm. In terms of biological role, one of the essential components for the initiation of protein synthesis. Protects formylmethionyl-tRNA from spontaneous hydrolysis and promotes its binding to the 30S ribosomal subunits. Also involved in the hydrolysis of GTP during the formation of the 70S ribosomal complex. This chain is Translation initiation factor IF-2, found in Leptospira borgpetersenii serovar Hardjo-bovis (strain JB197).